A 262-amino-acid polypeptide reads, in one-letter code: MEPFTHNDGNRDELIIQQKRDIEKEISDTTPLVSEQLPLTCLYAEYSGDEIFTAKIQDLSKKYKFIRRTRPDGNCFFRAFAYSYLEYLISNTSAYQEFKKLAEESKEKLVQLGFPSFTLEDFHETFMEVIQRVSPDNAGGHSTVQDELHKIFNEQGYSDYVVVYLRLITSGKLQEEADFYQNFIEGDLTIEAFRHLEVEPMYKESDHIHIIALCTALGAGVRVEYLDRGEGGTVKAHDFPEGSEPRIYLIYRPGHYDILYPN.

Residues 64–262 enclose the OTU domain; it reads KFIRRTRPDG…PGHYDILYPN (199 aa). The active site involves Asp72. The Nucleophile role is filled by Cys75. Ile168 lines the substrate pocket. His255 is a catalytic residue.

The protein belongs to the peptidase C65 family.

It carries out the reaction Thiol-dependent hydrolysis of ester, thioester, amide, peptide and isopeptide bonds formed by the C-terminal Gly of ubiquitin (a 76-residue protein attached to proteins as an intracellular targeting signal).. Possible hydrolase that can remove conjugated ubiquitin from proteins in vitro and may therefore play an important regulatory role at the level of protein turnover by preventing degradation. This Drosophila melanogaster (Fruit fly) protein is Ubiquitin thioesterase otubain-like.